The chain runs to 290 residues: Arylamine N-acetyltransferase 2 (290 aa).

The active-site Acyl-thioester intermediate is the Cys-68. Positions 103 and 104 each coordinate CoA. Substrate is bound at residue 106–107; sequence IH. Residues His-107 and Asp-122 contribute to the active site. 3 residues coordinate CoA: Tyr-208, Thr-214, and Ser-287.

This sequence belongs to the arylamine N-acetyltransferase family.

It localises to the cytoplasm. The enzyme catalyses an arylamine + acetyl-CoA = an N-acetylarylamine + CoA. It catalyses the reaction an N-hydroxyarylamine + acetyl-CoA = an N-acetoxyarylamine + CoA. Catalyzes the N- or O-acetylation of various arylamine and heterocyclic amine substrates, and participates in the detoxification of a plethora of hydrazine and arylamine drugs. The polypeptide is Arylamine N-acetyltransferase 2 (NAT2) (Macaca mulatta (Rhesus macaque)).